A 69-amino-acid polypeptide reads, in one-letter code: MSAFENFGVRQDVTDVTRLECGICWTVYDPADGDDVAQIAPGTPFAALPEEWHCPNCDAPKSKFMAIES.

One can recognise a Rubredoxin-like domain in the interval 16-67 (VTRLECGICWTVYDPADGDDVAQIAPGTPFAALPEEWHCPNCDAPKSKFMAI). 4 residues coordinate Fe cation: C21, C24, C54, and C57.

The protein belongs to the rubredoxin family. Fe(3+) is required as a cofactor.

Functionally, could be an electron transport intermediate in hydrogen oxidation. In Bradyrhizobium diazoefficiens (strain JCM 10833 / BCRC 13528 / IAM 13628 / NBRC 14792 / USDA 110), this protein is Probable rubredoxin HupI (hupI).